A 198-amino-acid polypeptide reads, in one-letter code: Recombination protein RecR (198 aa).

The segment at Cys58–Cys73 adopts a C4-type zinc-finger fold. The 95-residue stretch at Ser81 to Pro175 folds into the Toprim domain.

It belongs to the RecR family.

Functionally, may play a role in DNA repair. It seems to be involved in an RecBC-independent recombinational process of DNA repair. It may act with RecF and RecO. The protein is Recombination protein RecR of Clostridium botulinum (strain Alaska E43 / Type E3).